The primary structure comprises 177 residues: Adenine phosphoribosyltransferase (177 aa).

It belongs to the purine/pyrimidine phosphoribosyltransferase family. Homodimer.

Its subcellular location is the cytoplasm. The enzyme catalyses AMP + diphosphate = 5-phospho-alpha-D-ribose 1-diphosphate + adenine. Its pathway is purine metabolism; AMP biosynthesis via salvage pathway; AMP from adenine: step 1/1. Its function is as follows. Catalyzes a salvage reaction resulting in the formation of AMP, that is energically less costly than de novo synthesis. In Chlorobium phaeovibrioides (strain DSM 265 / 1930) (Prosthecochloris vibrioformis (strain DSM 265)), this protein is Adenine phosphoribosyltransferase.